Consider the following 273-residue polypeptide: Homeobox protein Nkx-2.2 (273 aa).

Disordered regions lie at residues 1-56 (MSLT…LDAV) and 91-131 (AASA…KRKR). Acidic residues predominate over residues 20-38 (DTNDEDGSVAEGPEEESEG). A DNA-binding region (homeobox) is located at residues 128 to 187 (KRKRRVLFSKAQTYELERRFRQQRYLSAPEREHLASLIRLTPTQVKIWFQNHRYKMKRAR).

The protein belongs to the NK-2 homeobox family. Interacts with OLIG2. As to expression, expressed in restricted areas of the developing CNS: the hindbrain and forebrain, and pancreas.

It is found in the nucleus. Functionally, transcriptional activator involved in the development of insulin-producting beta cells in the endocrine pancreas. May also be involved in specifying diencephalic neuromeric boundaries, and in controlling the expression of genes that play a role in axonal guidance. Binds to elements within the NEUROD1 promoter. This is Homeobox protein Nkx-2.2 (Nkx2-2) from Mus musculus (Mouse).